We begin with the raw amino-acid sequence, 515 residues long: SWI/SNF-related matrix-associated actin-dependent regulator of chromatin subfamily D member 1 (515 aa).

The tract at residues 1-128 (MAARAGFQSV…RNHNAKKKKM (128 aa)) is disordered. Gly residues predominate over residues 14–23 (GGAGASGGAG). The interaction with ESR1, NR1H4, NR3C1, PGR and SMARCA4 stretch occupies residues 43 to 167 (APGQGLYRSP…DQTIMRKRLD (125 aa)). Residues Arg68 and Arg88 each carry the asymmetric dimethylarginine modification. Lys101 is covalently cross-linked (Glycyl lysine isopeptide (Lys-Gly) (interchain with G-Cter in SUMO2)). The segment covering 104 to 117 (APQQIQQVQQQAVQ) has biased composition (low complexity). The segment at 168–474 (IQEALKRPIK…TMTDVVGNPE (307 aa)) is interaction with SMARCC1 and SMARCC2. Residues 180–515 (RKLRIFISNT…LEQALGIRNT (336 aa)) are necessary for GR/NR3C1-mediated remodeling and transcription from chromatin; required for GR/NR3C1 interaction with the BRG1/SMARCA4 complex in vivo. Phosphothreonine is present on Thr203. The residue at position 223 (Lys223) is an N6-acetyllysine. Positions 290-367 (YQPPQFKLDP…PQRLHALLMP (78 aa)) constitute an SWIB/MDM2 domain. Residues 412–440 (ASQQEIATLDNKIHETIETINQLKTQREF) adopt a coiled-coil conformation.

The protein belongs to the SMARCD family. As to quaternary structure, component of the multiprotein chromatin-remodeling complexes SWI/SNF: SWI/SNF-A (BAF), SWI/SNF-B (PBAF) and related complexes. The canonical complex contains a catalytic subunit (either SMARCA4/BRG1/BAF190A or SMARCA2/BRM/BAF190B), and at least SMARCE1, ACTL6A/BAF53, SMARCC1/BAF155, SMARCC2/BAF170, and SMARCB1/SNF5/BAF47. Other subunits specific to each of the complexes may also be present permitting several possible combinations developmentally and tissue specific. Component of the BAF complex, which includes at least actin (ACTB), ARID1A/BAF250A, ARID1B/BAF250B, SMARCA2/BRM, SMARCA4/BRG1/BAF190A, ACTL6A/BAF53, ACTL6B/BAF53B, SMARCE1/BAF57, SMARCC1/BAF155, SMARCC2/BAF170, SMARCB1/SNF5/INI1, and one or more SMARCD1/BAF60A, SMARCD2/BAF60B, or SMARCD3/BAF60C. In muscle cells, the BAF complex also contains DPF3. Component of neural progenitors-specific chromatin remodeling complex (npBAF complex) composed of at least, ARID1A/BAF250A or ARID1B/BAF250B, SMARCD1/BAF60A, SMARCD3/BAF60C, SMARCA2/BRM/BAF190B, SMARCA4/BRG1/BAF190A, SMARCB1/BAF47, SMARCC1/BAF155, SMARCE1/BAF57, SMARCC2/BAF170, PHF10/BAF45A, ACTL6A/BAF53A and actin. Component of neuron-specific chromatin remodeling complex (nBAF complex) composed of at least, ARID1A/BAF250A or ARID1B/BAF250B, SMARCD1/BAF60A, SMARCD3/BAF60C, SMARCA2/BRM/BAF190B, SMARCA4/BRG1/BAF190A, SMARCB1/BAF47, SMARCC1/BAF155, SMARCE1/BAF57, SMARCC2/BAF170, DPF1/BAF45B, DPF3/BAF45C, ACTL6B/BAF53B and actin. Component of the SWI/SNF-B (PBAF) chromatin remodeling complex, at least composed of SMARCA4/BRG1, SMARCB1/BAF47/SNF5, ACTL6A/BAF53A or ACTL6B/BAF53B, SMARCE1/BAF57, SMARCD1/BAF60A, SMARCD2/BAF60B, perhaps SMARCD3/BAF60C, SMARCC1/BAF155, SMARCC2/BAF170, PBRM1/BAF180, ARID2/BAF200 and actin (ACTB). Component of SWI/SNF (GBAF) subcomplex, which includes at least BICRA or BICRAL (mutually exclusive), BRD9, SS18, SMARCA2/BRM, SMARCA4/BRG1/BAF190A, ACTL6A/BAF53, SMARCC1/BAF155, and SMARCD1/BAF60A. Specifically interacts with the VDR heterodimer complex. Interacts with ESR1, NR3C1, NR1H4, PGR, SMARCA4, SMARCC1 and SMARCC2. Interacts with DPF2. Interacts with DPF3a (isoform 2 of DPF3/BAF45C) and with HDGFL2 in a DPF3a-dependent manner. Interacts with FOS, FOSB isoform 1 and 2, FOSL1 and FOSL2. Interacts with AKIRIN2. As to expression, ubiquitous.

Its subcellular location is the nucleus. Its function is as follows. Involved in transcriptional activation and repression of select genes by chromatin remodeling (alteration of DNA-nucleosome topology). Component of SWI/SNF chromatin remodeling complexes that carry out key enzymatic activities, changing chromatin structure by altering DNA-histone contacts within a nucleosome in an ATP-dependent manner. Belongs to the neural progenitors-specific chromatin remodeling complex (npBAF complex) and the neuron-specific chromatin remodeling complex (nBAF complex). During neural development a switch from a stem/progenitor to a postmitotic chromatin remodeling mechanism occurs as neurons exit the cell cycle and become committed to their adult state. The transition from proliferating neural stem/progenitor cells to postmitotic neurons requires a switch in subunit composition of the npBAF and nBAF complexes. As neural progenitors exit mitosis and differentiate into neurons, npBAF complexes which contain ACTL6A/BAF53A and PHF10/BAF45A, are exchanged for homologous alternative ACTL6B/BAF53B and DPF1/BAF45B or DPF3/BAF45C subunits in neuron-specific complexes (nBAF). The npBAF complex is essential for the self-renewal/proliferative capacity of the multipotent neural stem cells. The nBAF complex along with CREST plays a role regulating the activity of genes essential for dendrite growth. Has a strong influence on vitamin D-mediated transcriptional activity from an enhancer vitamin D receptor element (VDRE). May be a link between mammalian SWI-SNF-like chromatin remodeling complexes and the vitamin D receptor (VDR) heterodimer. Mediates critical interactions between nuclear receptors and the BRG1/SMARCA4 chromatin-remodeling complex for transactivation. The polypeptide is SWI/SNF-related matrix-associated actin-dependent regulator of chromatin subfamily D member 1 (Smarcd1) (Mus musculus (Mouse)).